The primary structure comprises 111 residues: uncharacterized protein (111 aa).

Helical transmembrane passes span 4–21 (FITA…FVSF), 28–47 (LVYF…YMIY), 51–73 (TGIR…VTAF), and 80–102 (SFFF…YLGM).

Its subcellular location is the cell membrane. This is an uncharacterized protein from Bacillus subtilis (strain 168).